Here is a 604-residue protein sequence, read N- to C-terminus: Prostaglandin G/H synthase 2 (604 aa).

An N-terminal signal peptide occupies residues 1 to 17 (MLARAGLLCASLSPPHA). The 38-residue stretch at 18–55 (ANPCCSNPCQNQGVCMSIGFDQYMCDCSRTGFYGENCS) folds into the EGF-like domain. 4 cysteine pairs are disulfide-bonded: Cys-21-Cys-32, Cys-22-Cys-145, Cys-26-Cys-42, and Cys-44-Cys-54. An N-linked (GlcNAc...) asparagine glycan is attached at Asn-53. Arg-106 lines the substrate pocket. Asn-130 carries N-linked (GlcNAc...) asparagine glycosylation. His-193 serves as the catalytic Proton acceptor. Tyr-341 contributes to the substrate binding site. The active-site For cyclooxygenase activity is Tyr-371. A heme b-binding site is contributed by His-374. Asn-396 carries an N-linked (GlcNAc...) asparagine glycan. S-nitrosocysteine is present on Cys-526. An intrachain disulfide couples Cys-555 to Cys-561. The N-linked (GlcNAc...) asparagine glycan is linked to Asn-580.

Belongs to the prostaglandin G/H synthase family. Homodimer. Heme b serves as cofactor. In terms of processing, S-nitrosylation by NOS2 (iNOS) activates enzyme activity. S-nitrosylation may take place on different Cys residues in addition to Cys-526.

It localises to the microsome membrane. The protein resides in the endoplasmic reticulum membrane. The protein localises to the nucleus inner membrane. It is found in the nucleus outer membrane. It catalyses the reaction (5Z,8Z,11Z,14Z)-eicosatetraenoate + AH2 + 2 O2 = prostaglandin H2 + A + H2O. The catalysed reaction is (5Z,8Z,11Z,14Z)-eicosatetraenoate + 2 O2 = prostaglandin G2. It carries out the reaction prostaglandin G2 + AH2 = prostaglandin H2 + A + H2O. The enzyme catalyses (5Z,8Z,11Z,14Z,17Z)-eicosapentaenoate + 2 O2 = prostaglandin G3. It catalyses the reaction prostaglandin G3 + AH2 = prostaglandin H3 + A + H2O. The catalysed reaction is (8Z,11Z,14Z)-eicosatrienoate + 2 O2 = prostaglandin G1. It carries out the reaction prostaglandin G1 + AH2 = prostaglandin H1 + A + H2O. The enzyme catalyses 2-(5Z,8Z,11Z,14Z)-eicosatetraenoyl-sn-glycero-3-phosphoethanolamine + 2 O2 = 2-(prostaglandin G2)-sn-glycero-3-phosphoethanolamine. It catalyses the reaction 2-(prostaglandin G2)-sn-glycero-3-phosphoethanolamine + AH2 = 2-(prostaglandin H2)-sn-glycero-3-phosphoethanolamine + A + H2O. The catalysed reaction is 2-(5Z,8Z,11Z,14Z)-eicosatetraenoyl-sn-glycero-3-phosphocholine + 2 O2 = 2-(prostaglandin G2)-sn-glycero-3-phosphocholine. It carries out the reaction 2-(prostaglandin G2)-sn-glycero-3-phosphocholine + AH2 = 2-(prostaglandin H2)-sn-glycero-3-phosphocholine + A + H2O. The enzyme catalyses (15S)-hydroperoxy-(5Z,8Z,11Z,13E)-eicosatetraenoate + AH2 = (15S)-hydroxy-(5Z,8Z,11Z,13E)-eicosatetraenoate + A + H2O. It catalyses the reaction 2-(5Z,8Z,11Z,14Z)-eicosatetraenoyl-sn-glycero-3-phosphocholine + AH2 + O2 = 2-[(15S)-hydroxy-(5Z,8Z,11Z,13E)-eicosatetraenoyl]-sn-glycero-3-phosphocholine + A + H2O. The catalysed reaction is 2-(5Z,8Z,11Z,14Z)-eicosatetraenoyl-sn-glycero-3-phosphocholine + AH2 + O2 = 2-[(15R)-hydroxy-(5Z,8Z,11Z,13E)-eicosatetraenoyl]-sn-glycero-3-phosphocholine + A + H2O. It carries out the reaction 2-(5Z,8Z,11Z,14Z)-eicosatetraenoyl-sn-glycero-3-phosphocholine + AH2 + O2 = 2-[(11R)-hydroxy-(5Z,8Z,12E,14Z)-eicosatetraenoyl]-sn-glycero-3-phosphocholine + A + H2O. The enzyme catalyses (9Z,12Z)-octadecadienoate + AH2 + O2 = 9-hydroxy-(10E,12Z)-octadecadienoate + A + H2O. It catalyses the reaction (9Z,12Z)-octadecadienoate + AH2 + O2 = 13-hydroxy-(9Z,11E)-octadecadienoate + A + H2O. The catalysed reaction is (5Z,8Z,11Z,14Z)-eicosatetraenoate + AH2 + O2 = (15R)-hydroxy-(5Z,8Z,11Z,13E)-eicosatetraenoate + A + H2O. It carries out the reaction (5Z,8Z,11Z,14Z)-eicosatetraenoate + AH2 + O2 = (11R)-hydroxy-(5Z,8Z,12E,14Z)-eicosatetraenoate + A + H2O. The enzyme catalyses (5Z,8Z,11Z,14Z,17Z)-eicosapentaenoate + AH2 + O2 = (11R)-hydroxy-(5Z,8Z,12E,14Z,17Z)-eicosapentaenoate + A + H2O. It catalyses the reaction (5Z,8Z,11Z,14Z,17Z)-eicosapentaenoate + AH2 + O2 = (18S)-hydroxy-(5Z,8Z,11Z,14Z,16E)-eicosapentaenoate + A + H2O. The catalysed reaction is (5Z,8Z,11Z,14Z,17Z)-eicosapentaenoate + AH2 + O2 = (18R)-hydroxy-(5Z,8Z,11Z,14Z,16E)-eicosapentaenoate + A + H2O. It carries out the reaction (5Z,8Z,11Z,14Z,17Z)-eicosapentaenoate + AH2 + O2 = (15R)-hydroxy-(5Z,8Z,11Z,13E,17Z)-eicosapentaenoate + A + H2O. The enzyme catalyses (5Z,8Z,11Z,14Z,17Z)-eicosapentaenoate + AH2 + O2 = (15S)-hydroxy-(5Z,8Z,11Z,13E,17Z)-eicosapentaenoate + A + H2O. It catalyses the reaction (7Z,10Z,13Z,16Z,19Z)-docosapentaenoate + AH2 + O2 = 13R-hydroxy-(7Z,10Z,14E,16Z,19Z)-docosapentaenoate + A + H2O. The catalysed reaction is (4Z,7Z,10Z,13Z,16Z,19Z)-docosahexaenoate + AH2 + O2 = 13-hydroxy-(4Z,7Z,10Z,14E,16Z,19Z)-docosahexaenoate + A + H2O. It carries out the reaction (5S)-hydroxy-(6E,8Z,11Z,14Z)-eicosatetraenoate + AH2 + O2 = (5S,15R)-dihydroxy-(6E,8Z,11Z,13E)-eicosatetraenoate + A + H2O. The enzyme catalyses (4Z,7Z,10Z,13Z,16Z,19Z)-docosahexaenoate + AH2 + O2 = 17R-hydroxy-(4Z,7Z,10Z,13Z,15E,19Z)-docosahexaenoate + A + H2O. It catalyses the reaction (5S)-hydroxy-(6E,8Z,11Z,14Z)-eicosatetraenoate + AH2 + O2 = (5S,15S)-dihydroxy-(6E,8Z,11Z,13E)-eicosatetraenoate + A + H2O. The catalysed reaction is (5S)-hydroxy-(6E,8Z,11Z,14Z)-eicosatetraenoate + AH2 + O2 = (5S,11R)-dihydroxy-(6E,8Z,12E,14Z)-eicosatetraenoate + A + H2O. It carries out the reaction 2-(5Z,8Z,11Z,14Z-eicosatetraenoyl)-glycerol + 2 O2 = 2-glyceryl-prostaglandin G2. The enzyme catalyses 2-glyceryl-prostaglandin G2 + AH2 = 2-glyceryl-prostaglandin H2 + A + H2O. It catalyses the reaction (5Z,8Z,11Z,14Z)-eicosatetraenoate + O2 = (15R)-hydroperoxy-(5Z,8Z,11Z,13E)-eicosatetraenoate. The catalysed reaction is (5Z,8Z,11Z,14Z)-eicosatetraenoate + O2 = 11R-hydroperoxy-(5Z,8Z,12E,14Z)-eicosatetraenoate. It carries out the reaction (9Z,12Z)-octadecadienoate + AH2 + O2 = (9R)-hydroxy-(10E,12Z)-octadecadienoate + A + H2O. The enzyme catalyses (9Z,12Z)-octadecadienoate + AH2 + O2 = (9S)-hydroxy-(10E,12Z)-octadecadienoate + A + H2O. It catalyses the reaction (9Z,12Z)-octadecadienoate + AH2 + O2 = (13S)-hydroxy-(9Z,11E)-octadecadienoate + A + H2O. The catalysed reaction is (9Z,12Z)-octadecadienoate + AH2 + O2 = (13R)-hydroxy-(9Z,11E)-octadecadienoate + A + H2O. Its pathway is lipid metabolism; prostaglandin biosynthesis. Dual cyclooxygenase and peroxidase in the biosynthesis pathway of prostanoids, a class of C20 oxylipins mainly derived from arachidonate ((5Z,8Z,11Z,14Z)-eicosatetraenoate, AA, C20:4(n-6)), with a particular role in the inflammatory response. The cyclooxygenase activity oxygenates AA to the hydroperoxy endoperoxide prostaglandin G2 (PGG2), and the peroxidase activity reduces PGG2 to the hydroxy endoperoxide prostaglandin H2 (PGH2), the precursor of all 2-series prostaglandins and thromboxanes. This complex transformation is initiated by abstraction of hydrogen at carbon 13 (with S-stereochemistry), followed by insertion of molecular O2 to form the endoperoxide bridge between carbon 9 and 11 that defines prostaglandins. The insertion of a second molecule of O2 (bis-oxygenase activity) yields a hydroperoxy group in PGG2 that is then reduced to PGH2 by two electrons. Similarly catalyzes successive cyclooxygenation and peroxidation of dihomo-gamma-linoleate (DGLA, C20:3(n-6)) and eicosapentaenoate (EPA, C20:5(n-3)) to corresponding PGH1 and PGH3, the precursors of 1- and 3-series prostaglandins. In an alternative pathway of prostanoid biosynthesis, converts 2-arachidonoyl lysophopholipids to prostanoid lysophopholipids, which are then hydrolyzed by intracellular phospholipases to release free prostanoids. Metabolizes 2-arachidonoyl glycerol yielding the glyceryl ester of PGH2, a process that can contribute to pain response. Generates lipid mediators from n-3 and n-6 polyunsaturated fatty acids (PUFAs) via a lipoxygenase-type mechanism. Oxygenates PUFAs to hydroperoxy compounds and then reduces them to corresponding alcohols. Plays a role in the generation of resolution phase interaction products (resolvins) during both sterile and infectious inflammation. Metabolizes docosahexaenoate (DHA, C22:6(n-3)) to 17R-HDHA, a precursor of the D-series resolvins (RvDs). As a component of the biosynthetic pathway of E-series resolvins (RvEs), converts eicosapentaenoate (EPA, C20:5(n-3)) primarily to 18S-HEPE that is further metabolized by ALOX5 and LTA4H to generate 18S-RvE1 and 18S-RvE2. In vascular endothelial cells, converts docosapentaenoate (DPA, C22:5(n-3)) to 13R-HDPA, a precursor for 13-series resolvins (RvTs) shown to activate macrophage phagocytosis during bacterial infection. In activated leukocytes, contributes to oxygenation of hydroxyeicosatetraenoates (HETE) to diHETES (5,15-diHETE and 5,11-diHETE). Can also use linoleate (LA, (9Z,12Z)-octadecadienoate, C18:2(n-6)) as substrate and produce hydroxyoctadecadienoates (HODEs) in a regio- and stereospecific manner, being (9R)-HODE ((9R)-hydroxy-(10E,12Z)-octadecadienoate) and (13S)-HODE ((13S)-hydroxy-(9Z,11E)-octadecadienoate) its major products. During neuroinflammation, plays a role in neuronal secretion of specialized preresolving mediators (SPMs) 15R-lipoxin A4 that regulates phagocytic microglia. In Neovison vison (American mink), this protein is Prostaglandin G/H synthase 2 (PTGS2).